The sequence spans 531 residues: Probable inactive beta-glucosidase 25 (531 aa).

A signal peptide spans 1 to 24 (MALKAILFLGLFLVVIVSPITVYG). A beta-D-glucoside-binding positions include Q53 and 202-203 (NE). Catalysis depends on E203, which acts as the Proton donor. Residues C222 and C230 are joined by a disulfide bond. A beta-D-glucoside is bound by residues F348 and 477–478 (EW).

It belongs to the glycosyl hydrolase 1 family.

This is Probable inactive beta-glucosidase 25 from Arabidopsis thaliana (Mouse-ear cress).